The following is a 1221-amino-acid chain: Putative DNA-directed RNA polymerase II subunit RPB2 homolog (1221 aa).

Composition is skewed to low complexity over residues 1-54 (MSRG…SASS) and 692-701 (PAPSSSPSDS). Disordered stretches follow at residues 1 to 63 (MSRG…PMSE) and 673 to 701 (RGSGYDSPPAPEERDIEMDPAPSSSPSDS). Asp-823 provides a ligand contact to Mg(2+). Residues Cys-1174, Cys-1177, Cys-1187, and Cys-1190 each contribute to the Zn(2+) site. The C4-type zinc-finger motif lies at 1174–1190 (CKECGRISDHFEYCRMC).

It belongs to the RNA polymerase beta chain family.

The enzyme catalyses RNA(n) + a ribonucleoside 5'-triphosphate = RNA(n+1) + diphosphate. Component of the DNA-dependent RNA polymerase that catalyzes the transcription of DNA into RNA using the four ribonucleoside triphosphates as substrates. Second largest component of RNA polymerase II which synthesizes mRNA precursors and many functional non-coding RNAs. Proposed to contribute to the polymerase catalytic activity and forms the polymerase active center together with the largest subunit. The protein is Putative DNA-directed RNA polymerase II subunit RPB2 homolog of Dryophytes versicolor (chameleon treefrog).